We begin with the raw amino-acid sequence, 230 residues long: Ureidoacrylate amidohydrolase RutB (230 aa).

Aspartate 24 functions as the Proton acceptor in the catalytic mechanism. Residue lysine 133 is part of the active site. Cysteine 166 serves as the catalytic Nucleophile.

This sequence belongs to the isochorismatase family. RutB subfamily.

The catalysed reaction is (Z)-3-ureidoacrylate + H2O + H(+) = (Z)-3-aminoacrylate + NH4(+) + CO2. The enzyme catalyses (Z)-3-ureidoacrylate + H2O = (Z)-3-aminoacrylate + carbamate + H(+). It carries out the reaction (Z)-2-methylureidoacrylate + H2O + H(+) = (Z)-2-methylaminoacrylate + NH4(+) + CO2. In terms of biological role, hydrolyzes ureidoacrylate to form aminoacrylate and carbamate. The carbamate hydrolyzes spontaneously, thereby releasing one of the nitrogen atoms of the pyrimidine ring as ammonia and one of its carbon atoms as CO2. The chain is Ureidoacrylate amidohydrolase RutB from Enterobacter sp. (strain 638).